A 417-amino-acid chain; its full sequence is Proteasome-activating nucleotidase (417 aa).

A coiled-coil region spans residues 24 to 78 (SKYLLDRVKQLEERNVRLKEEYRKIELEKKSVENKKVQYEREIRKLTSELDRLKT). ATP is bound by residues 203-208 (GTGKTL) and H342. The tract at residues 415–417 (MFA) is docks into pockets in the proteasome alpha-ring to cause gate opening.

This sequence belongs to the AAA ATPase family. In terms of assembly, homohexamer. The hexameric complex has a two-ring architecture resembling a top hat that caps the 20S proteasome core at one or both ends. Upon ATP-binding, the C-terminus of PAN interacts with the alpha-rings of the proteasome core by binding to the intersubunit pockets.

It is found in the cytoplasm. Its function is as follows. ATPase which is responsible for recognizing, binding, unfolding and translocation of substrate proteins into the archaeal 20S proteasome core particle. Is essential for opening the gate of the 20S proteasome via an interaction with its C-terminus, thereby allowing substrate entry and access to the site of proteolysis. Thus, the C-termini of the proteasomal ATPase function like a 'key in a lock' to induce gate opening and therefore regulate proteolysis. Unfolding activity requires energy from ATP hydrolysis, whereas ATP binding alone promotes ATPase-20S proteasome association which triggers gate opening, and supports translocation of unfolded substrates. The protein is Proteasome-activating nucleotidase of Methanocella arvoryzae (strain DSM 22066 / NBRC 105507 / MRE50).